Here is a 129-residue protein sequence, read N- to C-terminus: uncharacterized protein (129 aa).

The chain crosses the membrane as a helical span at residues 103 to 125; it reads AISSAFQYGLSTSNFFFIFLYIF.

Its subcellular location is the membrane. This is an uncharacterized protein from Acanthamoeba polyphaga (Amoeba).